A 657-amino-acid chain; its full sequence is MSPTPALFSLPEARTRFTKSTREALNNKNIKPLLTAFSQLPGSENEKKCTLDQAFRGVLEEEIINHSACENVLAIISLAIGGVTESVCTASTPFVLLGDVLDCLPLDQCDTIFTFVEKNVATWKSNTFYSAGKNYLLRMCNDLLRRLSKSQNTVFCGRIQLFLARLFPLSEKSGLNLQSQFNLENVTVFNTNEQESTLGQKHTEDREEGMDVEEGEMGDDEAPTTCSIPIDYNLYRKFWSLQDYFRNPVQCYEKISWKTFLKYSEEVLAVFKSYKLDDTQASRKKMEELKTGGEHVYFAKFLTSEKLMDLQLSDSNFRRHILLQYLILFQYLKGQVKFKSSNYVLTDEQSLWIEDTTKSVYQLLSENPPDGERFSKMVEHILNTEENWNSWKNEGCPSFVKERASDTKPTRVVRKRAAPEDFLGKGPNKKILIGNEELTRLWNLCPDNMEACKSETREYMPTLEEFFEEAIEQADPENMVESEYKAVNNSNYGWRALRLLARRSPHFFQPTNQQFKSLPEYLENMVIKLAKELPPPSEEIKTGEDEDEEDNDALLKENESPDVRRDKPITGEQIESFANKLGEQWKILAPYLEIKDSDIRQIECDSEDMKMRAKQLLVAWQDQEGVHATTDNLISALNKSGLSDLAESLTNDTETNS.

The residue at position 1 (Met1) is an N-acetylmethionine. Residue Ser2 is modified to Phosphoserine. Thr4 carries the post-translational modification Phosphothreonine. Lys31 participates in a covalent cross-link: Glycyl lysine isopeptide (Lys-Gly) (interchain with G-Cter in SUMO2). At Lys133 the chain carries N6-acetyllysine. The dock domain; interaction with THOC2 stretch occupies residues 133 to 167; sequence KNYLLRMCNDLLRRLSKSQNTVFCGRIQLFLARLF. Residues 194 to 221 form a disordered region; that stretch reads QESTLGQKHTEDREEGMDVEEGEMGDDE. Residues 206 to 221 are compositionally biased toward acidic residues; it reads REEGMDVEEGEMGDDE. A dock domain; interaction with THOC2 region spans residues 227–397; sequence SIPIDYNLYR…WNSWKNEGCP (171 aa). Lys300 is modified (N6-acetyllysine). Lys408 is covalently cross-linked (Glycyl lysine isopeptide (Lys-Gly) (interchain with G-Cter in SUMO2)). The short motif at 414–430 is the Nuclear localization signal element; it reads RKRAAPEDFLGKGPNKK. The interval 533-569 is disordered; the sequence is LPPPSEEIKTGEDEDEEDNDALLKENESPDVRRDKPI. Residue Ser537 is modified to Phosphoserine. Thr542 carries the post-translational modification Phosphothreonine. Residues 553-569 show a composition bias toward basic and acidic residues; the sequence is ALLKENESPDVRRDKPI. Residue Ser560 is modified to Phosphoserine. The 84-residue stretch at 570 to 653 folds into the Death domain; it reads TGEQIESFAN…DLAESLTNDT (84 aa). Lys580 is covalently cross-linked (Glycyl lysine isopeptide (Lys-Gly) (interchain with G-Cter in SUMO2)). Residue Lys595 forms a Glycyl lysine isopeptide (Lys-Gly) (interchain with G-Cter in SUMO1); alternate linkage. Lys595 is covalently cross-linked (Glycyl lysine isopeptide (Lys-Gly) (interchain with G-Cter in SUMO2); alternate).

This sequence belongs to the THOC1 family. Component of the THO subcomplex, which is composed of THOC1, THOC2, THOC3, THOC5, THOC6 and THOC7. The THO subcomplex interacts with DDX39B to form the THO-DDX39B complex which multimerizes into a 28-subunit tetrameric assembly. Component of the transcription/export (TREX) complex at least composed of ALYREF/THOC4, DDX39B, SARNP/CIP29, CHTOP and the THO subcomplex; in the complex interacts with THOC2, THOC5 and THOC7. TREX seems to have a dynamic structure involving ATP-dependent remodeling. Binds to the hypophosphorylated form of RB1. Interacts with RNA polymerase II. Interacts with LUZP4. Interacts with THOC5. In terms of processing, expression is altered specifically during apoptosis and is accompanied by the appearance of novel forms with smaller apparent molecular mass. Post-translationally, polyubiquitinated, leading to proteasomal degradation; probably involves NEDD4. As to expression, in the inner ear, specifically expressed in inner and outer hair cells (at protein level).

Its subcellular location is the nucleus. The protein localises to the nucleoplasm. It is found in the nucleus matrix. The protein resides in the cytoplasm. It localises to the cytosol. In terms of biological role, component of the THO subcomplex of the TREX complex which is thought to couple mRNA transcription, processing and nuclear export, and which specifically associates with spliced mRNA and not with unspliced pre-mRNA. Required for efficient export of polyadenylated RNA. The THOC1-THOC2-THOC3 core complex alone is sufficient to bind export factor NXF1-NXT1 and promote ATPase activity of DDX39B. TREX is recruited to spliced mRNAs by a transcription-independent mechanism, binds to mRNA upstream of the exon-junction complex (EJC) and is recruited in a splicing- and cap-dependent manner to a region near the 5' end of the mRNA where it functions in mRNA export to the cytoplasm via the TAP/NXF1 pathway. Regulates transcriptional elongation of a subset of genes. Involved in genome stability by preventing co-transcriptional R-loop formation. May play a role in hair cell formation, hence may be involved in hearing. Functionally, participates in an apoptotic pathway which is characterized by activation of caspase-6, increases in the expression of BAK1 and BCL2L1 and activation of NF-kappa-B. This pathway does not require p53/TP53, nor does the presence of p53/TP53 affect the efficiency of cell killing. Activates a G2/M cell cycle checkpoint prior to the onset of apoptosis. Apoptosis is inhibited by association with RB1. Essential for early embryonic development. Required for normal gene expression during postnatal testis development. The polypeptide is THO complex subunit 1 (Thoc1) (Mus musculus (Mouse)).